We begin with the raw amino-acid sequence, 147 residues long: Deoxyuridine 5'-triphosphate nucleotidohydrolase (147 aa).

Substrate contacts are provided by residues 67 to 69 (RSG), N80, and 84 to 86 (LID).

Belongs to the dUTPase family. Mg(2+) is required as a cofactor.

It catalyses the reaction dUTP + H2O = dUMP + diphosphate + H(+). The protein operates within pyrimidine metabolism; dUMP biosynthesis; dUMP from dCTP (dUTP route): step 2/2. Functionally, this enzyme is involved in nucleotide metabolism: it produces dUMP, the immediate precursor of thymidine nucleotides and it decreases the intracellular concentration of dUTP so that uracil cannot be incorporated into DNA. The protein is Deoxyuridine 5'-triphosphate nucleotidohydrolase of Dictyoglomus turgidum (strain DSM 6724 / Z-1310).